We begin with the raw amino-acid sequence, 630 residues long: Angiotensin-converting enzyme-related protein (630 aa).

Positions 1–22 are cleaved as a signal peptide; the sequence is MGACNITVLLLVIMLWLPHGLS. The Peptidase M2 domain maps to 28–615; it reads SASVLEARRF…SRLGVPLGWG (588 aa). Disulfide bonds link C142–C150 and C344–C362. H375 contacts Zn(2+). E376 functions as the Proton acceptor in the catalytic mechanism. 2 residues coordinate Zn(2+): H379 and E403. The active-site Proton donor is H505. Cysteines 530 and 548 form a disulfide.

It belongs to the peptidase M2 family. Zn(2+) is required as a cofactor. Glycosylated.

The protein localises to the secreted. Its subcellular location is the extracellular space. The catalysed reaction is Release of a C-terminal dipeptide, oligopeptide-|-Xaa-Yaa, when Xaa is not Pro, and Yaa is neither Asp nor Glu. Thus, conversion of angiotensin I to angiotensin II, with increase in vasoconstrictor activity, but no action on angiotensin II.. Inhibited by captopril, lisinopril, trandolaprilat, fosinoprilat and enalaprilat. Functionally, may be involved in the specific maturation or degradation of a number of bioactive peptides. May have a role in the specification of heart progenitors. The protein is Angiotensin-converting enzyme-related protein (Acer) of Drosophila melanogaster (Fruit fly).